Consider the following 348-residue polypeptide: NADH-ubiquinone oxidoreductase chain 2 (348 aa).

Helical transmembrane passes span 1 to 21 (MSPYVTMILISSLGLGTTITF), 25 to 45 (SWLMAWMGLEINTLAITPLMV), 60 to 80 (FLTQATASGLLLFATLNNAWM), 93 to 115 (LSAPMITMALALKMGVAPMHFWL), 149 to 169 (LNTTTMTILGLTSTIIGGLGG), 177 to 197 (KVLAYSSIAHLGWMVIIIQYS), 200 to 220 (LALLNLLLYITMTSTAFLTLM), 239 to 259 (IATMTAMLALLALGGLPPLTG), 274 to 294 (NLPALATLMALSALLSLFFYL), and 326 to 346 (LAMLSIMTLMALPTTPTMVAI).

This sequence belongs to the complex I subunit 2 family.

It localises to the mitochondrion inner membrane. The catalysed reaction is a ubiquinone + NADH + 5 H(+)(in) = a ubiquinol + NAD(+) + 4 H(+)(out). Core subunit of the mitochondrial membrane respiratory chain NADH dehydrogenase (Complex I) that is believed to belong to the minimal assembly required for catalysis. Complex I functions in the transfer of electrons from NADH to the respiratory chain. The immediate electron acceptor for the enzyme is believed to be ubiquinone. The polypeptide is NADH-ubiquinone oxidoreductase chain 2 (MT-ND2) (Latimeria chalumnae (Coelacanth)).